The sequence spans 266 residues: Mitochondrial intermembrane space import and assembly protein 40 (266 aa).

The N-terminal 28 residues, 1–28 (MFRQVSVRALRRAAGRSVCASRAQMVRH), are a transit peptide targeting the mitochondrion. Residues 29–44 (SSTLGGGKGSYNLDMP) lie on the Mitochondrial matrix side of the membrane. Residues 45–61 (ALALAAGVTLLAGYMVY) form a helical; Signal-anchor for type II membrane protein membrane-spanning segment. The Mitochondrial intermembrane segment spans residues 62 to 266 (PRAPKAKQAA…AESAKSDEGH (205 aa)). Positions 87 to 98 (ASLQASAPVQAT) are enriched in polar residues. The segment at 87–180 (ASLQASAPVQ…GQQGAYNPDT (94 aa)) is disordered. Composition is skewed to low complexity over residues 130-157 (AEVGETQAEQAPAVETEQAAEAEQAAEA) and 165-175 (AGEAAQGQQGA). Cystine bridges form between cysteine 187/cysteine 189, cysteine 198/cysteine 231, and cysteine 208/cysteine 221. The CHCH domain occupies 195-239 (HGPCGEEFKAAFACFVYSEAEPKGIDCVEKFQVMQDCFRQHPEHY). Short sequence motifs (cx9C motif) lie at residues 198–208 (CGEEFKAAFAC) and 221–231 (CVEKFQVMQDC). A disordered region spans residues 242–266 (QLESEEQAVRETEAAAESAKSDEGH). Basic and acidic residues predominate over residues 248–266 (QAVRETEAAAESAKSDEGH).

In terms of assembly, monomer. Cu(2+) is required as a cofactor. Zn(2+) serves as cofactor.

Its subcellular location is the mitochondrion inner membrane. Its function is as follows. Required for the import and folding of small cysteine-containing proteins (small Tim) in the mitochondrial intermembrane space (IMS). Forms a redox cycle with ERV1 that involves a disulfide relay system. Precursor proteins to be imported into the IMS are translocated in their reduced form into the mitochondria. The oxidized form of MIA40 forms a transient intermolecular disulfide bridge with the reduced precursor protein, resulting in oxidation of the precursor protein that now contains an intramolecular disulfide bond and is able to undergo folding in the IMS. In Eremothecium gossypii (strain ATCC 10895 / CBS 109.51 / FGSC 9923 / NRRL Y-1056) (Yeast), this protein is Mitochondrial intermembrane space import and assembly protein 40 (MIA40).